The following is a 545-amino-acid chain: External NADH-ubiquinone oxidoreductase 2, mitochondrial (545 aa).

The transit peptide at 1-21 (MLPRLGFARTARSIHRFKMTQ) directs the protein to the mitochondrion. 99–129 (ELVILGTGWGAISLLKKLDTSLYNVTVVSPR) lines the FAD pocket. 260 to 296 (LTFVVVGGGPTGVEFAAELQDYINQDLRKWMPDLSKE) contacts NAD(+).

This sequence belongs to the NADH dehydrogenase family.

The protein localises to the mitochondrion intermembrane space. It catalyses the reaction a quinone + NADH + H(+) = a quinol + NAD(+). It carries out the reaction a ubiquinone + NADH + H(+) = a ubiquinol + NAD(+). Its function is as follows. External NADH dehydrogenase required for optimum cellular growth with a number of nonfermentable carbon sources, including ethanol. With NDE1, performes the mitochondrial oxidation of cytosolic NADH under these growth conditions. Regulates the mitochondrial glycerol-3-phosphate dehydrogenase, GUT2, also involved in cytosolic NADH oxidation. In Saccharomyces cerevisiae (strain ATCC 204508 / S288c) (Baker's yeast), this protein is External NADH-ubiquinone oxidoreductase 2, mitochondrial (NDE2).